Here is a 336-residue protein sequence, read N- to C-terminus: Holliday junction branch migration complex subunit RuvB (336 aa).

Residues Ala-4–Tyr-184 are large ATPase domain (RuvB-L). ATP-binding positions include Ile-23, Arg-24, Gly-65, Lys-68, Thr-69, Thr-70, Glu-131–Tyr-133, Arg-174, Tyr-184, and Arg-221. Mg(2+) is bound at residue Thr-69. Residues Gln-185–Asn-255 form a small ATPAse domain (RuvB-S) region. Positions Ala-258 to Pro-336 are head domain (RuvB-H). DNA contacts are provided by Arg-294, Arg-313, and Arg-318.

It belongs to the RuvB family. As to quaternary structure, homohexamer. Forms an RuvA(8)-RuvB(12)-Holliday junction (HJ) complex. HJ DNA is sandwiched between 2 RuvA tetramers; dsDNA enters through RuvA and exits via RuvB. An RuvB hexamer assembles on each DNA strand where it exits the tetramer. Each RuvB hexamer is contacted by two RuvA subunits (via domain III) on 2 adjacent RuvB subunits; this complex drives branch migration. In the full resolvosome a probable DNA-RuvA(4)-RuvB(12)-RuvC(2) complex forms which resolves the HJ.

Its subcellular location is the cytoplasm. It carries out the reaction ATP + H2O = ADP + phosphate + H(+). Its function is as follows. The RuvA-RuvB-RuvC complex processes Holliday junction (HJ) DNA during genetic recombination and DNA repair, while the RuvA-RuvB complex plays an important role in the rescue of blocked DNA replication forks via replication fork reversal (RFR). RuvA specifically binds to HJ cruciform DNA, conferring on it an open structure. The RuvB hexamer acts as an ATP-dependent pump, pulling dsDNA into and through the RuvAB complex. RuvB forms 2 homohexamers on either side of HJ DNA bound by 1 or 2 RuvA tetramers; 4 subunits per hexamer contact DNA at a time. Coordinated motions by a converter formed by DNA-disengaged RuvB subunits stimulates ATP hydrolysis and nucleotide exchange. Immobilization of the converter enables RuvB to convert the ATP-contained energy into a lever motion, pulling 2 nucleotides of DNA out of the RuvA tetramer per ATP hydrolyzed, thus driving DNA branch migration. The RuvB motors rotate together with the DNA substrate, which together with the progressing nucleotide cycle form the mechanistic basis for DNA recombination by continuous HJ branch migration. Branch migration allows RuvC to scan DNA until it finds its consensus sequence, where it cleaves and resolves cruciform DNA. The chain is Holliday junction branch migration complex subunit RuvB from Salmonella choleraesuis (strain SC-B67).